The sequence spans 306 residues: Ribosomal protein L11 methyltransferase (306 aa).

Residues T154, G179, D201, and N242 each coordinate S-adenosyl-L-methionine.

It belongs to the methyltransferase superfamily. PrmA family.

The protein localises to the cytoplasm. The enzyme catalyses L-lysyl-[protein] + 3 S-adenosyl-L-methionine = N(6),N(6),N(6)-trimethyl-L-lysyl-[protein] + 3 S-adenosyl-L-homocysteine + 3 H(+). Functionally, methylates ribosomal protein L11. This chain is Ribosomal protein L11 methyltransferase, found in Stenotrophomonas maltophilia (strain K279a).